Here is a 272-residue protein sequence, read N- to C-terminus: D-aminoacyl-tRNA deacylase (272 aa).

It belongs to the DtdA deacylase family. Monomer. Requires Zn(2+) as cofactor.

The catalysed reaction is a D-aminoacyl-tRNA + H2O = a tRNA + a D-alpha-amino acid + H(+). It carries out the reaction glycyl-tRNA(Ala) + H2O = tRNA(Ala) + glycine + H(+). Its function is as follows. D-aminoacyl-tRNA deacylase with broad substrate specificity. By recycling D-aminoacyl-tRNA to D-amino acids and free tRNA molecules, this enzyme counteracts the toxicity associated with the formation of D-aminoacyl-tRNA entities in vivo. The sequence is that of D-aminoacyl-tRNA deacylase from Thermococcus kodakarensis (strain ATCC BAA-918 / JCM 12380 / KOD1) (Pyrococcus kodakaraensis (strain KOD1)).